A 161-amino-acid polypeptide reads, in one-letter code: NADH-quinone oxidoreductase subunit I (161 aa).

4Fe-4S ferredoxin-type domains follow at residues 53–82 (RRYP…IEAE) and 92–121 (TRYD…EGPN). Positions 62, 65, 68, 72, 101, 104, 107, and 111 each coordinate [4Fe-4S] cluster.

Belongs to the complex I 23 kDa subunit family. As to quaternary structure, NDH-1 is composed of 14 different subunits. Subunits NuoA, H, J, K, L, M, N constitute the membrane sector of the complex. The cofactor is [4Fe-4S] cluster.

It localises to the cell inner membrane. The catalysed reaction is a quinone + NADH + 5 H(+)(in) = a quinol + NAD(+) + 4 H(+)(out). Functionally, NDH-1 shuttles electrons from NADH, via FMN and iron-sulfur (Fe-S) centers, to quinones in the respiratory chain. The immediate electron acceptor for the enzyme in this species is believed to be ubiquinone. Couples the redox reaction to proton translocation (for every two electrons transferred, four hydrogen ions are translocated across the cytoplasmic membrane), and thus conserves the redox energy in a proton gradient. This is NADH-quinone oxidoreductase subunit I from Hyphomonas neptunium (strain ATCC 15444).